A 292-amino-acid polypeptide reads, in one-letter code: Formamidopyrimidine-DNA glycosylase (292 aa).

Pro2 serves as the catalytic Schiff-base intermediate with DNA. The active-site Proton donor is the Glu3. Lys60 serves as the catalytic Proton donor; for beta-elimination activity. Positions 109, 128, and 173 each coordinate DNA. The FPG-type zinc finger occupies 258–292; the sequence is NVYRRTGRECRKCGNLIERQKITGRSTHWCPNCQK. The active-site Proton donor; for delta-elimination activity is the Arg282.

Belongs to the FPG family. As to quaternary structure, monomer. Requires Zn(2+) as cofactor.

It carries out the reaction Hydrolysis of DNA containing ring-opened 7-methylguanine residues, releasing 2,6-diamino-4-hydroxy-5-(N-methyl)formamidopyrimidine.. The catalysed reaction is 2'-deoxyribonucleotide-(2'-deoxyribose 5'-phosphate)-2'-deoxyribonucleotide-DNA = a 3'-end 2'-deoxyribonucleotide-(2,3-dehydro-2,3-deoxyribose 5'-phosphate)-DNA + a 5'-end 5'-phospho-2'-deoxyribonucleoside-DNA + H(+). In terms of biological role, involved in base excision repair of DNA damaged by oxidation or by mutagenic agents. Acts as a DNA glycosylase that recognizes and removes damaged bases. Has a preference for oxidized purines, such as 7,8-dihydro-8-oxoguanine (8-oxoG). Has AP (apurinic/apyrimidinic) lyase activity and introduces nicks in the DNA strand. Cleaves the DNA backbone by beta-delta elimination to generate a single-strand break at the site of the removed base with both 3'- and 5'-phosphates. The sequence is that of Formamidopyrimidine-DNA glycosylase from Prochlorococcus marinus (strain MIT 9301).